The sequence spans 234 residues: UPF0173 metal-dependent hydrolase Meso_1362 (234 aa).

The protein belongs to the UPF0173 family.

The sequence is that of UPF0173 metal-dependent hydrolase Meso_1362 from Chelativorans sp. (strain BNC1).